The chain runs to 69 residues: Light-harvesting polypeptide B-800/860 alpha chain (69 aa).

The Cytoplasmic portion of the chain corresponds to 1–14 (MTNGKIWLVVKPTV). A helical membrane pass occupies residues 15-35 (GLPIGMLFAALLAVLIHGLLF). Histidine 31 contacts a bacteriochlorophyll. The Periplasmic segment spans residues 36–69 (VDGRLKSWWSEFPVAKPAVVSVQAAPAPVAAEVK).

It belongs to the antenna complex alpha subunit family. The core complex is formed by different alpha and beta chains, binding bacteriochlorophyll molecules, and arranged most probably in tetrameric structures disposed around the reaction center. The non-pigmented gamma chains may constitute additional components.

It is found in the cell inner membrane. Antenna complexes are light-harvesting systems, which transfer the excitation energy to the reaction centers. In Rhodocyclus tenuis (Rhodospirillum tenue), this protein is Light-harvesting polypeptide B-800/860 alpha chain.